Reading from the N-terminus, the 254-residue chain is Activity-regulated cytoskeleton associated protein 1 (254 aa).

This sequence belongs to the ARC/ARG3.1 family. Homooligomer; homooligomerizes into virion-like capsids. In terms of tissue distribution, expressed in a specific population of brain neurons, named E347, that are necessary and sufficient for proper body fat storage.

It is found in the extracellular vesicle membrane. It localises to the synapse. Its function is as follows. Master regulator of synaptic plasticity that self-assembles into virion-like capsids that encapsulate RNAs and mediate intercellular RNA transfer from motorneurons to muscles. Arc1 protein is released from motorneurons in extracellular vesicles that mediate the transfer of Arc1 mRNA into muscle cells, where Arc1 mRNA can undergo activity-dependent translation. Intercellular transfer od Arc1 mRNA is required for synaptic plasticity at the neuromuscular junction. May play a role in energy balance: required for regulation of body fat by a specific population of brain neurons, named E347, that are necessary and sufficient for proper body fat storage. The chain is Activity-regulated cytoskeleton associated protein 1 from Drosophila melanogaster (Fruit fly).